A 240-amino-acid chain; its full sequence is Carboxy-S-adenosyl-L-methionine synthase (240 aa).

S-adenosyl-L-methionine-binding positions include tyrosine 35, 61-63 (GCS), 86-87 (DN), 112-113 (DI), and arginine 194.

It belongs to the class I-like SAM-binding methyltransferase superfamily. Cx-SAM synthase family. Homodimer.

The enzyme catalyses prephenate + S-adenosyl-L-methionine = carboxy-S-adenosyl-L-methionine + 3-phenylpyruvate + H2O. Functionally, catalyzes the conversion of S-adenosyl-L-methionine (SAM) to carboxy-S-adenosyl-L-methionine (Cx-SAM). This chain is Carboxy-S-adenosyl-L-methionine synthase, found in Wolinella succinogenes (strain ATCC 29543 / DSM 1740 / CCUG 13145 / JCM 31913 / LMG 7466 / NCTC 11488 / FDC 602W) (Vibrio succinogenes).